An 870-amino-acid chain; its full sequence is Leucine--tRNA ligase (870 aa).

Residues proline 43–histidine 53 carry the 'HIGH' region motif. The 'KMSKS' region signature appears at lysine 626 to serine 630. Lysine 629 contacts ATP.

This sequence belongs to the class-I aminoacyl-tRNA synthetase family.

The protein resides in the cytoplasm. The enzyme catalyses tRNA(Leu) + L-leucine + ATP = L-leucyl-tRNA(Leu) + AMP + diphosphate. This is Leucine--tRNA ligase from Pseudoalteromonas atlantica (strain T6c / ATCC BAA-1087).